The following is a 501-amino-acid chain: Ribose import ATP-binding protein RbsA (501 aa).

2 ABC transporter domains span residues 6-242 and 253-495; these read LQLS…VGRK and VHGQ…VGKK. 38 to 45 lines the ATP pocket; sequence GENGAGKS.

The protein belongs to the ABC transporter superfamily. Ribose importer (TC 3.A.1.2.1) family. As to quaternary structure, the complex is composed of an ATP-binding protein (RbsA), two transmembrane proteins (RbsC) and a solute-binding protein (RbsB).

It localises to the cell inner membrane. The catalysed reaction is D-ribose(out) + ATP + H2O = D-ribose(in) + ADP + phosphate + H(+). In terms of biological role, part of the ABC transporter complex RbsABC involved in ribose import. Responsible for energy coupling to the transport system. The chain is Ribose import ATP-binding protein RbsA from Vibrio vulnificus (strain CMCP6).